Reading from the N-terminus, the 109-residue chain is DNILYSSEVLHENQYISYGPYEFIMQHDCNLVLYESGNPTWASNTGGLALHCRATLQTDGNLVVQNSANRIIWQSNTGTGTNGDYLLVLQKNGNVVIVGPPIWATGTGR.

A Bulb-type lectin domain is found at D1–R109. Cysteines 29 and 52 form a disulfide. The propeptide occupies T79–N82.

Homotrimer or homotetramer.

It is found in the secreted. In terms of biological role, mannose-specific lectin. Shows agglutinating activity toward rabbit erythrocytes and mitogenic activity towards mouse lymphocytes. The sequence is that of Mannose-specific lectin from Aloe arborescens (Kidachi aloe).